A 155-amino-acid chain; its full sequence is Ribosome maturation factor RimP (155 aa).

The protein belongs to the RimP family.

It localises to the cytoplasm. In terms of biological role, required for maturation of 30S ribosomal subunits. The chain is Ribosome maturation factor RimP from Prochlorococcus marinus (strain MIT 9515).